The sequence spans 87 residues: uncharacterized protein (87 aa).

Residues 1–22 (MKIKTTVAALSVLSVLSFGAFA) form the signal peptide.

It belongs to the BhsA/McbA family.

The protein resides in the periplasm. This is an uncharacterized protein from Escherichia coli O6:H1 (strain CFT073 / ATCC 700928 / UPEC).